Consider the following 321-residue polypeptide: Lipoyl synthase (321 aa).

[4Fe-4S] cluster contacts are provided by Cys68, Cys73, Cys79, Cys94, Cys98, Cys101, and Ser308. One can recognise a Radical SAM core domain in the interval 80–297; sequence FNHGTATFMI…KAEAMAMGFT (218 aa).

It belongs to the radical SAM superfamily. Lipoyl synthase family. It depends on [4Fe-4S] cluster as a cofactor.

The protein localises to the cytoplasm. The catalysed reaction is [[Fe-S] cluster scaffold protein carrying a second [4Fe-4S](2+) cluster] + N(6)-octanoyl-L-lysyl-[protein] + 2 oxidized [2Fe-2S]-[ferredoxin] + 2 S-adenosyl-L-methionine + 4 H(+) = [[Fe-S] cluster scaffold protein] + N(6)-[(R)-dihydrolipoyl]-L-lysyl-[protein] + 4 Fe(3+) + 2 hydrogen sulfide + 2 5'-deoxyadenosine + 2 L-methionine + 2 reduced [2Fe-2S]-[ferredoxin]. Its pathway is protein modification; protein lipoylation via endogenous pathway; protein N(6)-(lipoyl)lysine from octanoyl-[acyl-carrier-protein]: step 2/2. Functionally, catalyzes the radical-mediated insertion of two sulfur atoms into the C-6 and C-8 positions of the octanoyl moiety bound to the lipoyl domains of lipoate-dependent enzymes, thereby converting the octanoylated domains into lipoylated derivatives. In Cronobacter sakazakii (strain ATCC BAA-894) (Enterobacter sakazakii), this protein is Lipoyl synthase.